A 104-amino-acid polypeptide reads, in one-letter code: NADH-ubiquinone oxidoreductase 12 kDa subunit, mitochondrial (104 aa).

This sequence belongs to the complex I NDUFS6 subunit family. In terms of assembly, complex I is composed of about 40 different subunits.

It localises to the mitochondrion inner membrane. Accessory subunit of the mitochondrial membrane respiratory chain NADH dehydrogenase (Complex I), that is believed not to be involved in catalysis. Complex I functions in the transfer of electrons from NADH to the respiratory chain. The immediate electron acceptor for the enzyme is believed to be ubiquinone. This chain is NADH-ubiquinone oxidoreductase 12 kDa subunit, mitochondrial (nuo-12.3), found in Neurospora crassa (strain ATCC 24698 / 74-OR23-1A / CBS 708.71 / DSM 1257 / FGSC 987).